Reading from the N-terminus, the 463-residue chain is Probable mannan endo-1,4-beta-mannosidase F (463 aa).

The N-terminal stretch at 1 to 18 is a signal peptide; the sequence is MRSLSSIALLSVVGAASA. Residues 19–54 form the CBM1 domain; that stretch reads QAGPWAQCGGKSFSGSSECASGWKCQELNEWFSQCV. Residues 57–78 form a disordered region; it reads AESTTPTVSSTPTPTDAPSVSI. Low complexity predominate over residues 59–77; sequence STTPTVSSTPTPTDAPSVS. The interval 75-118 is ser-rich linker; sequence SVSITASVTTGINKSISVSSASKSTPLPSSSSASPSPRPTGSGS. A glycan (N-linked (GlcNAc...) asparagine) is linked at Asn87. The span at 93–118 shows a compositional bias: low complexity; sequence SSASKSTPLPSSSSASPSPRPTGSGS. The segment at 93–121 is disordered; that stretch reads SSASKSTPLPSSSSASPSPRPTGSGSFAK. The catalytic stretch occupies residues 119–463; it reads FAKADGLQFS…MDHMENVNKN (345 aa). Substrate contacts are provided by Trp171 and Asn285. The active-site Proton donor/acceptor is Glu286. Residue Tyr361 coordinates substrate. Catalysis depends on Glu395, which acts as the Nucleophile. Trp424 is a substrate binding site.

Belongs to the glycosyl hydrolase 5 (cellulase A) family.

It localises to the secreted. It catalyses the reaction Random hydrolysis of (1-&gt;4)-beta-D-mannosidic linkages in mannans, galactomannans and glucomannans.. Endo-1,4-mannanase, a crucial enzyme for depolymerization of seed galactomannans and wood galactoglucomannans. This Aspergillus oryzae (strain ATCC 42149 / RIB 40) (Yellow koji mold) protein is Probable mannan endo-1,4-beta-mannosidase F (manF).